The primary structure comprises 198 residues: Nucleoside triphosphate pyrophosphatase (198 aa).

Residue Asp-72 is the Proton acceptor of the active site.

Belongs to the Maf family. Requires a divalent metal cation as cofactor.

The protein resides in the cytoplasm. The catalysed reaction is a ribonucleoside 5'-triphosphate + H2O = a ribonucleoside 5'-phosphate + diphosphate + H(+). It catalyses the reaction a 2'-deoxyribonucleoside 5'-triphosphate + H2O = a 2'-deoxyribonucleoside 5'-phosphate + diphosphate + H(+). Functionally, nucleoside triphosphate pyrophosphatase. May have a dual role in cell division arrest and in preventing the incorporation of modified nucleotides into cellular nucleic acids. The protein is Nucleoside triphosphate pyrophosphatase of Corynebacterium diphtheriae (strain ATCC 700971 / NCTC 13129 / Biotype gravis).